The primary structure comprises 90 residues: uncharacterized protein (90 aa).

The tract at residues 1–26 (MFKRSVSRLFCAPAPAPAPRKQPGGR) is disordered. Positions 33-66 (NLNQSVKKQLNHLEVLERIKKQRKEQKNNRNQVD) form a coiled coil.

This is an uncharacterized protein from Dictyostelium discoideum (Social amoeba).